A 492-amino-acid chain; its full sequence is Fascin-2 (492 aa).

The protein belongs to the fascin family. In terms of tissue distribution, localized specifically in the outer and inner segments of the photoreceptor cells in the retina.

The protein resides in the cytoplasm. Its subcellular location is the cytoskeleton. It is found in the cell projection. The protein localises to the stereocilium. Acts as an actin bundling protein. May play a pivotal role in photoreceptor cell-specific events, such as disk morphogenesis. This is Fascin-2 (FSCN2) from Homo sapiens (Human).